Here is a 979-residue protein sequence, read N- to C-terminus: Pro-apoptotic serine protease NMA111 (979 aa).

Basic and acidic residues predominate over residues 1–20 (MKRNGESHLNGEAKKSRTEQ). The interval 1-43 (MKRNGESHLNGEAKKSRTEQNQEQQDYQDEYYSSSDEELLPSS) is disordered. The span at 21–34 (NQEQQDYQDEYYSS) shows a compositional bias: low complexity. Positions 65-260 (KVVNSVVSIQ…LPVSRPKRAL (196 aa)) are serine protease. Residues His108, Asp139, and Ser222 each act as charge relay system in the active site. PDZ domains lie at 277–362 (EWQL…FVFQ) and 871–943 (PHYG…VSFD).

This sequence belongs to the peptidase S1C family.

The protein resides in the nucleus. Its function is as follows. Nuclear serine protease which mediates apoptosis. In Lodderomyces elongisporus (strain ATCC 11503 / CBS 2605 / JCM 1781 / NBRC 1676 / NRRL YB-4239) (Yeast), this protein is Pro-apoptotic serine protease NMA111 (NMA111).